An 868-amino-acid chain; its full sequence is Translation initiation factor IF-2 (868 aa).

Residues 103-183 show a composition bias toward basic and acidic residues; sequence RSELPETSDR…RQAAAERETV (81 aa). The tract at residues 103 to 274 is disordered; sequence RSELPETSDR…GRPMLMPEQK (172 aa). Over residues 190–207 the composition is skewed to pro residues; the sequence is VAAPPIPRPAPEPRPPAR. Positions 213-254 are enriched in basic and acidic residues; the sequence is PKAEAPRAHPAERETEARGDKRSAGLSRKDEYRELQGDDFRK. Residues 255–264 show a composition bias toward basic residues; sequence GGGKRKKPKT. Positions 369–538 constitute a tr-type G domain; it reads PRPPVVTIMG…LVQAEVLELK (170 aa). Residues 378-385 form a G1 region; sequence GHVDHGKT. Residue 378–385 coordinates GTP; sequence GHVDHGKT. The tract at residues 403-407 is G2; the sequence is GITQH. The segment at 424-427 is G3; it reads DTPG. Residues 424-428 and 478-481 each bind GTP; these read DTPGH and NKMD. The segment at 478-481 is G4; sequence NKMD. The interval 514–516 is G5; sequence SAK.

This sequence belongs to the TRAFAC class translation factor GTPase superfamily. Classic translation factor GTPase family. IF-2 subfamily.

It is found in the cytoplasm. In terms of biological role, one of the essential components for the initiation of protein synthesis. Protects formylmethionyl-tRNA from spontaneous hydrolysis and promotes its binding to the 30S ribosomal subunits. Also involved in the hydrolysis of GTP during the formation of the 70S ribosomal complex. The protein is Translation initiation factor IF-2 of Methylococcus capsulatus (strain ATCC 33009 / NCIMB 11132 / Bath).